Consider the following 135-residue polypeptide: Ribosome-binding factor A (135 aa).

Belongs to the RbfA family. Monomer. Binds 30S ribosomal subunits, but not 50S ribosomal subunits or 70S ribosomes.

It localises to the cytoplasm. Its function is as follows. One of several proteins that assist in the late maturation steps of the functional core of the 30S ribosomal subunit. Associates with free 30S ribosomal subunits (but not with 30S subunits that are part of 70S ribosomes or polysomes). Required for efficient processing of 16S rRNA. May interact with the 5'-terminal helix region of 16S rRNA. This is Ribosome-binding factor A from Aliivibrio fischeri (strain MJ11) (Vibrio fischeri).